The chain runs to 271 residues: Urease accessory protein UreD (271 aa).

Belongs to the UreD family. In terms of assembly, ureD, UreF and UreG form a complex that acts as a GTP-hydrolysis-dependent molecular chaperone, activating the urease apoprotein by helping to assemble the nickel containing metallocenter of UreC. The UreE protein probably delivers the nickel.

The protein localises to the cytoplasm. Functionally, required for maturation of urease via the functional incorporation of the urease nickel metallocenter. In Azorhizobium caulinodans (strain ATCC 43989 / DSM 5975 / JCM 20966 / LMG 6465 / NBRC 14845 / NCIMB 13405 / ORS 571), this protein is Urease accessory protein UreD.